Consider the following 357-residue polypeptide: Protein RecA (357 aa).

78 to 85 contributes to the ATP binding site; the sequence is GPESSGKT.

The protein belongs to the RecA family.

It localises to the cytoplasm. Can catalyze the hydrolysis of ATP in the presence of single-stranded DNA, the ATP-dependent uptake of single-stranded DNA by duplex DNA, and the ATP-dependent hybridization of homologous single-stranded DNAs. It interacts with LexA causing its activation and leading to its autocatalytic cleavage. In Cereibacter sphaeroides (strain ATCC 17029 / ATH 2.4.9) (Rhodobacter sphaeroides), this protein is Protein RecA.